A 140-amino-acid chain; its full sequence is Ribosome-binding factor A (140 aa).

The disordered stretch occupies residues 115–140 (EDERQQRGDIPPGSDQQPGSDEQPTG). Residues 128-140 (SDQQPGSDEQPTG) show a composition bias toward polar residues.

It belongs to the RbfA family. As to quaternary structure, monomer. Binds 30S ribosomal subunits, but not 50S ribosomal subunits or 70S ribosomes.

It is found in the cytoplasm. One of several proteins that assist in the late maturation steps of the functional core of the 30S ribosomal subunit. Associates with free 30S ribosomal subunits (but not with 30S subunits that are part of 70S ribosomes or polysomes). Required for efficient processing of 16S rRNA. May interact with the 5'-terminal helix region of 16S rRNA. This chain is Ribosome-binding factor A, found in Synechococcus sp. (strain CC9605).